Reading from the N-terminus, the 1529-residue chain is Protein STU1 (1529 aa).

Disordered regions lie at residues 266–314 (SMGR…DEQI), 617–638 (KPRT…ARKA), 651–745 (KELR…SQGI), and 1070–1090 (SAND…TSPI). Low complexity predominate over residues 273–290 (TISSNSSTPASLSSSTMS). Polar residues-rich tracts occupy residues 295-308 (RTNF…ISPS) and 619-634 (RTIT…SSLT). Positions 660–674 (TSISRPSSRINSTSS) are enriched in low complexity. Polar residues predominate over residues 708-723 (TPSTSSLSRVESNQDA).

The protein belongs to the CLASP family. Interacts with microtubules.

Its subcellular location is the cytoplasm. It localises to the cytoskeleton. The protein resides in the nucleus. It is found in the spindle. Microtubule binding protein that promotes the stabilization of dynamic microtubules. Required for mitotic spindle formation. This is Protein STU1 (STU1) from Debaryomyces hansenii (strain ATCC 36239 / CBS 767 / BCRC 21394 / JCM 1990 / NBRC 0083 / IGC 2968) (Yeast).